The sequence spans 293 residues: Homoserine kinase (293 aa).

80 to 90 (RPASGLGSSAA) contacts ATP.

It belongs to the GHMP kinase family. Homoserine kinase subfamily.

It localises to the cytoplasm. The catalysed reaction is L-homoserine + ATP = O-phospho-L-homoserine + ADP + H(+). It participates in amino-acid biosynthesis; L-threonine biosynthesis; L-threonine from L-aspartate: step 4/5. Its function is as follows. Catalyzes the ATP-dependent phosphorylation of L-homoserine to L-homoserine phosphate. The chain is Homoserine kinase from Halorubrum lacusprofundi (strain ATCC 49239 / DSM 5036 / JCM 8891 / ACAM 34).